We begin with the raw amino-acid sequence, 147 residues long: D-aminoacyl-tRNA deacylase (147 aa).

The short motif at 136 to 137 is the Gly-cisPro motif, important for rejection of L-amino acids element; sequence GP.

Belongs to the DTD family. As to quaternary structure, homodimer.

Its subcellular location is the cytoplasm. The catalysed reaction is glycyl-tRNA(Ala) + H2O = tRNA(Ala) + glycine + H(+). It catalyses the reaction a D-aminoacyl-tRNA + H2O = a tRNA + a D-alpha-amino acid + H(+). Its function is as follows. An aminoacyl-tRNA editing enzyme that deacylates mischarged D-aminoacyl-tRNAs. Also deacylates mischarged glycyl-tRNA(Ala), protecting cells against glycine mischarging by AlaRS. Acts via tRNA-based rather than protein-based catalysis; rejects L-amino acids rather than detecting D-amino acids in the active site. By recycling D-aminoacyl-tRNA to D-amino acids and free tRNA molecules, this enzyme counteracts the toxicity associated with the formation of D-aminoacyl-tRNA entities in vivo and helps enforce protein L-homochirality. The protein is D-aminoacyl-tRNA deacylase of Streptococcus pneumoniae (strain Taiwan19F-14).